A 92-amino-acid chain; its full sequence is PqqA binding protein (92 aa).

Belongs to the PqqD family. In terms of assembly, monomer. Interacts with PqqE.

The protein operates within cofactor biosynthesis; pyrroloquinoline quinone biosynthesis. Its function is as follows. Functions as a PqqA binding protein and presents PqqA to PqqE, in the pyrroloquinoline quinone (PQQ) biosynthetic pathway. This Xanthomonas euvesicatoria pv. vesicatoria (strain 85-10) (Xanthomonas campestris pv. vesicatoria) protein is PqqA binding protein.